A 79-amino-acid polypeptide reads, in one-letter code: Keratin-associated protein 21-1 (79 aa).

Interacts with hair keratins.

Functionally, in the hair cortex, hair keratin intermediate filaments are embedded in an interfilamentous matrix, consisting of hair keratin-associated proteins (KRTAP), which are essential for the formation of a rigid and resistant hair shaft through their extensive disulfide bond cross-linking with abundant cysteine residues of hair keratins. The matrix proteins include the high-sulfur and high-glycine-tyrosine keratins. This is Keratin-associated protein 21-1 (KRTAP21-1) from Homo sapiens (Human).